Consider the following 255-residue polypeptide: Imidazole glycerol phosphate synthase subunit HisF (255 aa).

Active-site residues include aspartate 12 and aspartate 131.

The protein belongs to the HisA/HisF family. As to quaternary structure, heterodimer of HisH and HisF.

The protein resides in the cytoplasm. The catalysed reaction is 5-[(5-phospho-1-deoxy-D-ribulos-1-ylimino)methylamino]-1-(5-phospho-beta-D-ribosyl)imidazole-4-carboxamide + L-glutamine = D-erythro-1-(imidazol-4-yl)glycerol 3-phosphate + 5-amino-1-(5-phospho-beta-D-ribosyl)imidazole-4-carboxamide + L-glutamate + H(+). It participates in amino-acid biosynthesis; L-histidine biosynthesis; L-histidine from 5-phospho-alpha-D-ribose 1-diphosphate: step 5/9. In terms of biological role, IGPS catalyzes the conversion of PRFAR and glutamine to IGP, AICAR and glutamate. The HisF subunit catalyzes the cyclization activity that produces IGP and AICAR from PRFAR using the ammonia provided by the HisH subunit. The chain is Imidazole glycerol phosphate synthase subunit HisF from Ignicoccus hospitalis (strain KIN4/I / DSM 18386 / JCM 14125).